The sequence spans 130 residues: U-scoloptoxin(16)-Er4a (130 aa).

Residues 1–26 form the signal peptide; that stretch reads MNTVSVVQFLAVGCAVFVLYGRGVFA.

The protein belongs to the scoloptoxin-16 family. Post-translationally, contains 3 disulfide bonds. As to expression, expressed by the venom gland.

Its subcellular location is the secreted. In Ethmostigmus rubripes (Giant centipede), this protein is U-scoloptoxin(16)-Er4a.